The sequence spans 286 residues: Mitochondrial dicarboxylate carrier (286 aa).

Solcar repeat units follow at residues 7-87 (SRWY…MRDY), 100-187 (SKVL…AKQL), and 196-279 (DNIF…LRKH). Transmembrane regions (helical) follow at residues 9–29 (WYFG…LDLL), 62–81 (GLSA…FAIY), and 102–122 (VLLG…ADLV). Lys158 is subject to N6-acetyllysine. 3 helical membrane passes run 162 to 181 (GATM…LSCY), 202 to 222 (FLSS…LDVL), and 254 to 274 (GLVP…MFLE).

This sequence belongs to the mitochondrial carrier (TC 2.A.29) family. In terms of tissue distribution, expressed most strongly in liver, then kidney, and at lower levels in heart and brain.

The protein resides in the mitochondrion inner membrane. It carries out the reaction (S)-malate(in) + phosphate(out) = (S)-malate(out) + phosphate(in). The catalysed reaction is malonate(out) + (S)-malate(in) = malonate(in) + (S)-malate(out). The enzyme catalyses (S)-malate(in) + succinate(out) = (S)-malate(out) + succinate(in). It catalyses the reaction (S)-malate(in) + sulfate(out) = (S)-malate(out) + sulfate(in). It carries out the reaction malonate(out) + phosphate(in) = malonate(in) + phosphate(out). The catalysed reaction is succinate(out) + phosphate(in) = succinate(in) + phosphate(out). The enzyme catalyses sulfate(out) + phosphate(in) = sulfate(in) + phosphate(out). It catalyses the reaction malonate(out) + succinate(in) = malonate(in) + succinate(out). Functionally, catalyzes the electroneutral exchange or flux of physiologically important metabolites such as dicarboxylates (malonate, malate, succinate), inorganic sulfur-containing anions, and phosphate, across mitochondrial inner membrane. Plays an important role in gluconeogenesis, fatty acid metabolism, urea synthesis, and sulfur metabolism, particularly in liver, by supplying the substrates for the different metabolic processes. Regulates fatty acid release from adipocytes, and contributes to systemic insulin sensitivity. In Rattus norvegicus (Rat), this protein is Mitochondrial dicarboxylate carrier.